A 502-amino-acid chain; its full sequence is Ribose import ATP-binding protein RbsA (502 aa).

ABC transporter domains follow at residues Ile6–Asp242 and Ala253–Arg496. Gly38 to Ser45 contributes to the ATP binding site.

The protein belongs to the ABC transporter superfamily. Ribose importer (TC 3.A.1.2.1) family. The complex is composed of an ATP-binding protein (RbsA), two transmembrane proteins (RbsC) and a solute-binding protein (RbsB).

It localises to the cell inner membrane. The enzyme catalyses D-ribose(out) + ATP + H2O = D-ribose(in) + ADP + phosphate + H(+). Functionally, part of the ABC transporter complex RbsABC involved in ribose import. Responsible for energy coupling to the transport system. This Cereibacter sphaeroides (strain ATCC 17023 / DSM 158 / JCM 6121 / CCUG 31486 / LMG 2827 / NBRC 12203 / NCIMB 8253 / ATH 2.4.1.) (Rhodobacter sphaeroides) protein is Ribose import ATP-binding protein RbsA.